We begin with the raw amino-acid sequence, 487 residues long: Benzaldehyde dehydrogenase [NAD(+)] (487 aa).

232–237 (GSTQVG) contacts NAD(+). Residues glutamate 254 and cysteine 288 contribute to the active site.

This sequence belongs to the aldehyde dehydrogenase family. Homotetramer.

It carries out the reaction benzaldehyde + NAD(+) + H2O = benzoate + NADH + 2 H(+). In Pseudomonas putida (Arthrobacter siderocapsulatus), this protein is Benzaldehyde dehydrogenase [NAD(+)] (xylC).